The sequence spans 217 residues: Large ribosomal subunit protein uL1 (217 aa).

An N-acetylserine modification is found at Ser2. Tyr11 is subject to Phosphotyrosine. N6-acetyllysine occurs at positions 91 and 106. Residue Lys118 is modified to N6-acetyllysine; alternate. A Glycyl lysine isopeptide (Lys-Gly) (interchain with G-Cter in SUMO1); alternate cross-link involves residue Lys118. Residue Lys118 forms a Glycyl lysine isopeptide (Lys-Gly) (interchain with G-Cter in SUMO2); alternate linkage. Lys161 is covalently cross-linked (Glycyl lysine isopeptide (Lys-Gly) (interchain with G-Cter in SUMO2)).

This sequence belongs to the universal ribosomal protein uL1 family. Component of the large ribosomal subunit.

The protein localises to the cytoplasm. In terms of biological role, component of the large ribosomal subunit. The ribosome is a large ribonucleoprotein complex responsible for the synthesis of proteins in the cell. The protein is Large ribosomal subunit protein uL1 (RPL10A) of Bos taurus (Bovine).